Reading from the N-terminus, the 98-residue chain is MSMVYFNIFMAFTVSLVGLLMYRSHLMSSLLCLEGMMLSLFVLMSMTILNNHFTLASMAPIILLVFAACEAALGLSLLVMVSNTYGTDYVQNLNLLQC.

The next 3 membrane-spanning stretches (helical) occupy residues 1 to 21, 29 to 49, and 61 to 81; these read MSMV…GLLM, SLLC…MTIL, and IILL…LVMV.

Belongs to the complex I subunit 4L family. As to quaternary structure, core subunit of respiratory chain NADH dehydrogenase (Complex I) which is composed of 45 different subunits.

It localises to the mitochondrion inner membrane. It carries out the reaction a ubiquinone + NADH + 5 H(+)(in) = a ubiquinol + NAD(+) + 4 H(+)(out). Functionally, core subunit of the mitochondrial membrane respiratory chain NADH dehydrogenase (Complex I) which catalyzes electron transfer from NADH through the respiratory chain, using ubiquinone as an electron acceptor. Part of the enzyme membrane arm which is embedded in the lipid bilayer and involved in proton translocation. The chain is NADH-ubiquinone oxidoreductase chain 4L (MT-ND4L) from Otaria byronia (South American sea lion).